Reading from the N-terminus, the 389-residue chain is Cobalt-precorrin-5B C(1)-methyltransferase (389 aa).

A disordered region spans residues M1–D25.

It belongs to the CbiD family.

The enzyme catalyses Co-precorrin-5B + S-adenosyl-L-methionine = Co-precorrin-6A + S-adenosyl-L-homocysteine. It participates in cofactor biosynthesis; adenosylcobalamin biosynthesis; cob(II)yrinate a,c-diamide from sirohydrochlorin (anaerobic route): step 6/10. Its function is as follows. Catalyzes the methylation of C-1 in cobalt-precorrin-5B to form cobalt-precorrin-6A. This chain is Cobalt-precorrin-5B C(1)-methyltransferase, found in Nitratidesulfovibrio vulgaris (strain ATCC 29579 / DSM 644 / CCUG 34227 / NCIMB 8303 / VKM B-1760 / Hildenborough) (Desulfovibrio vulgaris).